Consider the following 1530-residue polypeptide: DNA-directed RNA polymerase III subunit RPC1 (1530 aa).

Positions 74, 77, 84, 87, 114, 117, and 161 each coordinate Zn(2+). Residues Asp503, Asp505, and Asp507 each coordinate Mg(2+). Residues 846–858 (PTEFFFHTMAGRE) are bridging helix. Residues 992 to 1001 (EEQESREDAL) show a composition bias toward basic and acidic residues. Disordered regions lie at residues 992-1016 (EEQESREDALHNSNGKTNDRESRPR) and 1057-1099 (NLLN…SKEG).

This sequence belongs to the RNA polymerase beta' chain family. As to quaternary structure, component of the RNA polymerase III (Pol III) complex consisting of 17 subunits.

It localises to the nucleus. The enzyme catalyses RNA(n) + a ribonucleoside 5'-triphosphate = RNA(n+1) + diphosphate. Its function is as follows. DNA-dependent RNA polymerase catalyzes the transcription of DNA into RNA using the four ribonucleoside triphosphates as substrates. Largest and catalytic core component of RNA polymerase III which synthesizes small RNAs, such as 5S rRNA and tRNAs. Forms the polymerase active center together with the second largest subunit. A single-stranded DNA template strand of the promoter is positioned within the central active site cleft of Pol III. A bridging helix emanates from RPC1 and crosses the cleft near the catalytic site and is thought to promote translocation of Pol III by acting as a ratchet that moves the RNA-DNA hybrid through the active site by switching from straight to bent conformations at each step of nucleotide addition. The chain is DNA-directed RNA polymerase III subunit RPC1 from Trypanosoma brucei brucei.